The following is a 453-amino-acid chain: GTPase Der (453 aa).

EngA-type G domains follow at residues 3–167 (PIIV…ISEK) and 187–360 (IKVA…EDSK). GTP contacts are provided by residues 9 to 16 (GRTNVGKS), 57 to 61 (DTAGL), 119 to 122 (NKID), 193 to 200 (GRPNVGKS), 240 to 244 (DTAGA), and 305 to 308 (NKCD). Residues 361–445 (RKISTSTLIK…PIQIQFKDNE (85 aa)) enclose the KH-like domain.

This sequence belongs to the TRAFAC class TrmE-Era-EngA-EngB-Septin-like GTPase superfamily. EngA (Der) GTPase family. As to quaternary structure, associates with the 50S ribosomal subunit.

Its function is as follows. GTPase that plays an essential role in the late steps of ribosome biogenesis. This Buchnera aphidicola subsp. Acyrthosiphon pisum (strain 5A) protein is GTPase Der.